The following is a 200-amino-acid chain: Recombination protein RecR (200 aa).

The segment at 57 to 72 (CQHCRTFTENSLCDIC) adopts a C4-type zinc-finger fold. A Toprim domain is found at 81–176 (GQLCIVETPA…NITRIAHGVP (96 aa)).

Belongs to the RecR family.

Functionally, may play a role in DNA repair. It seems to be involved in an RecBC-independent recombinational process of DNA repair. It may act with RecF and RecO. This chain is Recombination protein RecR, found in Tolumonas auensis (strain DSM 9187 / NBRC 110442 / TA 4).